A 216-amino-acid chain; its full sequence is Uracil phosphoribosyltransferase (216 aa).

Residues arginine 30, arginine 39, alanine 73 to isoleucine 76, and lysine 75 contribute to the GTP site. Arginine 83 is a 5-phospho-alpha-D-ribose 1-diphosphate binding site. Lysine 100 provides a ligand contact to GTP. Arginine 108 serves as a coordination point for 5-phospho-alpha-D-ribose 1-diphosphate. Residue arginine 129 participates in GTP binding. Residues aspartate 135 and aspartate 135–threonine 143 each bind 5-phospho-alpha-D-ribose 1-diphosphate. Tyrosine 199 lines the D-ribose 5-phosphate pocket. Residues isoleucine 200 and glycine 205–phenylalanine 207 each bind uracil. Aspartate 206 contributes to the 5-phospho-alpha-D-ribose 1-diphosphate binding site.

It belongs to the UPRTase family. Requires Mg(2+) as cofactor.

The enzyme catalyses UMP + diphosphate = 5-phospho-alpha-D-ribose 1-diphosphate + uracil. It participates in pyrimidine metabolism; UMP biosynthesis via salvage pathway; UMP from uracil: step 1/1. Allosterically activated by GTP. Functionally, catalyzes the conversion of uracil and 5-phospho-alpha-D-ribose 1-diphosphate (PRPP) to UMP and diphosphate. The chain is Uracil phosphoribosyltransferase (uprt) from Dictyostelium discoideum (Social amoeba).